The chain runs to 428 residues: Gamma-glutamyl phosphate reductase (428 aa).

This sequence belongs to the gamma-glutamyl phosphate reductase family.

It is found in the cytoplasm. It carries out the reaction L-glutamate 5-semialdehyde + phosphate + NADP(+) = L-glutamyl 5-phosphate + NADPH + H(+). Its pathway is amino-acid biosynthesis; L-proline biosynthesis; L-glutamate 5-semialdehyde from L-glutamate: step 2/2. In terms of biological role, catalyzes the NADPH-dependent reduction of L-glutamate 5-phosphate into L-glutamate 5-semialdehyde and phosphate. The product spontaneously undergoes cyclization to form 1-pyrroline-5-carboxylate. This Mesorhizobium japonicum (strain LMG 29417 / CECT 9101 / MAFF 303099) (Mesorhizobium loti (strain MAFF 303099)) protein is Gamma-glutamyl phosphate reductase.